The following is a 548-amino-acid chain: uncharacterized protein (548 aa).

One can recognise a DhaL domain in the interval 8-200 (KLFADMIIQG…LLCVYEGFLK (193 aa)).

This is an uncharacterized protein from Staphylococcus aureus (strain bovine RF122 / ET3-1).